Consider the following 476-residue polypeptide: Aspartyl/glutamyl-tRNA(Asn/Gln) amidotransferase subunit B (476 aa).

It belongs to the GatB/GatE family. GatB subfamily. In terms of assembly, heterotrimer of A, B and C subunits.

It catalyses the reaction L-glutamyl-tRNA(Gln) + L-glutamine + ATP + H2O = L-glutaminyl-tRNA(Gln) + L-glutamate + ADP + phosphate + H(+). The enzyme catalyses L-aspartyl-tRNA(Asn) + L-glutamine + ATP + H2O = L-asparaginyl-tRNA(Asn) + L-glutamate + ADP + phosphate + 2 H(+). Functionally, allows the formation of correctly charged Asn-tRNA(Asn) or Gln-tRNA(Gln) through the transamidation of misacylated Asp-tRNA(Asn) or Glu-tRNA(Gln) in organisms which lack either or both of asparaginyl-tRNA or glutaminyl-tRNA synthetases. The reaction takes place in the presence of glutamine and ATP through an activated phospho-Asp-tRNA(Asn) or phospho-Glu-tRNA(Gln). This chain is Aspartyl/glutamyl-tRNA(Asn/Gln) amidotransferase subunit B, found in Clostridium botulinum (strain ATCC 19397 / Type A).